Reading from the N-terminus, the 116-residue chain is Cell cycle protein GpsB (116 aa).

Positions Leu-32–Asn-69 form a coiled coil. The segment at Lys-57–Ser-78 is disordered. Residues Ala-67–Ser-78 are compositionally biased toward polar residues.

This sequence belongs to the GpsB family. Forms polymers through the coiled coil domains. Interacts with PBP1, MreC and EzrA.

The protein resides in the cytoplasm. Functionally, divisome component that associates with the complex late in its assembly, after the Z-ring is formed, and is dependent on DivIC and PBP2B for its recruitment to the divisome. Together with EzrA, is a key component of the system that regulates PBP1 localization during cell cycle progression. Its main role could be the removal of PBP1 from the cell pole after pole maturation is completed. Also contributes to the recruitment of PBP1 to the division complex. Not essential for septum formation. The sequence is that of Cell cycle protein GpsB from Streptococcus gordonii (strain Challis / ATCC 35105 / BCRC 15272 / CH1 / DL1 / V288).